The sequence spans 112 residues: uncharacterized protein (112 aa).

The disordered stretch occupies residues 70 to 112 (GLYRGRRPPGRDAARPTTAILFAQGRPPLLDQRAPTRRGSHQR).

This is an uncharacterized protein from Homo sapiens (Human).